The chain runs to 421 residues: Nuclear envelope integral membrane protein 2 (421 aa).

The first 22 residues, 1-22, serve as a signal peptide directing secretion; it reads MPPGSWWLVLWLPPLATLPAGA. The next 5 helical transmembrane spans lie at 147 to 167, 175 to 195, 206 to 226, 232 to 252, and 279 to 299; these read NVVD…FFYA, VFYY…FVLL, TFGA…CQLM, LWCG…LCSF, and LVLV…MILL.

The protein belongs to the NEMP family.

It localises to the nucleus inner membrane. In Rattus norvegicus (Rat), this protein is Nuclear envelope integral membrane protein 2 (Nemp2).